The chain runs to 183 residues: Large ribosomal subunit protein eL18 (183 aa).

The interval His-151–Val-183 is disordered.

The protein belongs to the eukaryotic ribosomal protein eL18 family.

The protein localises to the cytoplasm. This Plutella xylostella (Diamondback moth) protein is Large ribosomal subunit protein eL18 (RpL18).